The sequence spans 1203 residues: DNA-directed RNA polymerase subunit beta' (1203 aa).

Residues C60, C62, C75, and C78 each contribute to the Zn(2+) site. Positions 449, 451, and 453 each coordinate Mg(2+). Zn(2+)-binding residues include C818, C892, C899, and C902.

Belongs to the RNA polymerase beta' chain family. As to quaternary structure, the RNAP catalytic core consists of 2 alpha, 1 beta, 1 beta' and 1 omega subunit. When a sigma factor is associated with the core the holoenzyme is formed, which can initiate transcription. Requires Mg(2+) as cofactor. The cofactor is Zn(2+).

It catalyses the reaction RNA(n) + a ribonucleoside 5'-triphosphate = RNA(n+1) + diphosphate. Its function is as follows. DNA-dependent RNA polymerase catalyzes the transcription of DNA into RNA using the four ribonucleoside triphosphates as substrates. The polypeptide is DNA-directed RNA polymerase subunit beta' (Bacillus anthracis).